A 422-amino-acid polypeptide reads, in one-letter code: Phosphoribosylamine--glycine ligase (422 aa).

An ATP-grasp domain is found at 107–314; it reads KAFMQRHGIP…LFDVLDRAID (208 aa). ATP is bound at residue 133–194; the sequence is VDREGAPIVI…EEFLAGEEAS (62 aa). Glu-284 and Asn-286 together coordinate Mg(2+).

This sequence belongs to the GARS family. Requires Mg(2+) as cofactor. The cofactor is Mn(2+).

The catalysed reaction is 5-phospho-beta-D-ribosylamine + glycine + ATP = N(1)-(5-phospho-beta-D-ribosyl)glycinamide + ADP + phosphate + H(+). Its pathway is purine metabolism; IMP biosynthesis via de novo pathway; N(1)-(5-phospho-D-ribosyl)glycinamide from 5-phospho-alpha-D-ribose 1-diphosphate: step 2/2. In Ralstonia nicotianae (strain ATCC BAA-1114 / GMI1000) (Ralstonia solanacearum), this protein is Phosphoribosylamine--glycine ligase.